The sequence spans 72 residues: Translation initiation factor IF-1 (72 aa).

One can recognise an S1-like domain in the interval 1–72 (MSKEDHIEME…SKARITFRHR (72 aa)).

The protein belongs to the IF-1 family. In terms of assembly, component of the 30S ribosomal translation pre-initiation complex which assembles on the 30S ribosome in the order IF-2 and IF-3, IF-1 and N-formylmethionyl-tRNA(fMet); mRNA recruitment can occur at any time during PIC assembly.

Its subcellular location is the cytoplasm. Functionally, one of the essential components for the initiation of protein synthesis. Stabilizes the binding of IF-2 and IF-3 on the 30S subunit to which N-formylmethionyl-tRNA(fMet) subsequently binds. Helps modulate mRNA selection, yielding the 30S pre-initiation complex (PIC). Upon addition of the 50S ribosomal subunit IF-1, IF-2 and IF-3 are released leaving the mature 70S translation initiation complex. This is Translation initiation factor IF-1 from Methylococcus capsulatus (strain ATCC 33009 / NCIMB 11132 / Bath).